Here is a 186-residue protein sequence, read N- to C-terminus: MNDCSRCAGSTSSGPTHWSGRIRDIADFPKPGIVFKDITPLLSDGPDFASALDEMAQPWRTTPLDAVLGIEARGFILGAALARELRTGFVPVRKPGKLPGRTLIQEYALEYGTDRIEMHEDALPRGARVLIVDDVLATGGTLRAALGLAAQLELEIVGAAVLVELLALQGRSKWLNDVPLLATLSY.

Belongs to the purine/pyrimidine phosphoribosyltransferase family. Homodimer.

The protein localises to the cytoplasm. The enzyme catalyses AMP + diphosphate = 5-phospho-alpha-D-ribose 1-diphosphate + adenine. The protein operates within purine metabolism; AMP biosynthesis via salvage pathway; AMP from adenine: step 1/1. Catalyzes a salvage reaction resulting in the formation of AMP, that is energically less costly than de novo synthesis. This Xanthomonas campestris pv. campestris (strain B100) protein is Adenine phosphoribosyltransferase.